The following is a 93-amino-acid chain: UPF0457 protein GTNG_2792 (93 aa).

It belongs to the UPF0457 family.

The polypeptide is UPF0457 protein GTNG_2792 (Geobacillus thermodenitrificans (strain NG80-2)).